The following is a 287-amino-acid chain: ATP synthase subunit a (287 aa).

Transmembrane regions (helical) follow at residues L37–A57, F96–L116, L149–L169, P187–A207, E224–V244, and T266–A286.

The protein belongs to the ATPase A chain family. As to quaternary structure, F-type ATPases have 2 components, CF(1) - the catalytic core - and CF(0) - the membrane proton channel. CF(1) has five subunits: alpha(3), beta(3), gamma(1), delta(1), epsilon(1). CF(0) has three main subunits: a(1), b(2) and c(9-12). The alpha and beta chains form an alternating ring which encloses part of the gamma chain. CF(1) is attached to CF(0) by a central stalk formed by the gamma and epsilon chains, while a peripheral stalk is formed by the delta and b chains.

The protein resides in the cell inner membrane. Functionally, key component of the proton channel; it plays a direct role in the translocation of protons across the membrane. This chain is ATP synthase subunit a, found in Acidovorax sp. (strain JS42).